Reading from the N-terminus, the 427-residue chain is MAEQDVENELLDYDEDEEPQAPQESTPAPPKKDVKGSYVSIHSSGFRDFLLKPELLRAIVDCGFEHPSEVQHECIPQAILGMDVLCQAKSGMGKTAVFVLATLQQIEPVNGQVSVLVMCHTRELAFQISKEYERFSKYMPSVKVSVFFGGLSIKKDEDVLKKNCPHVVVGTPGRILALVRSRSLNLRNVKHFVLDECDKMLEQLDMRRDVQEIFRLTPHEKQCMMFSATLSKEIRPVCRKFMQDPMEVFVDDETKLTLHGLQQYYVKLKDSEKNRKLFDLLDVLEFNQVVIFVKSVQRCMALAQLLVEQNFPAIAIHRGMAQEERLSRYQQFKDFQRRILVATNLFGRGMDIERVNIVFNYDMPEDSDTYLHRVARAGRFGTKGLAVTFVSDENDAKILNDVQDRFEVNVAELPEEIDISTYIEQSR.

A compositionally biased stretch (acidic residues) spans 1–19 (MAEQDVENELLDYDEDEEP). The interval 1–36 (MAEQDVENELLDYDEDEEPQAPQESTPAPPKKDVKG) is disordered. At alanine 2 the chain carries N-acetylalanine. Lysine 31 is covalently cross-linked (Glycyl lysine isopeptide (Lys-Gly) (interchain with G-Cter in SUMO2)). Lysine 35 is subject to N6-acetyllysine; alternate. Lysine 35 is covalently cross-linked (Glycyl lysine isopeptide (Lys-Gly) (interchain with G-Cter in SUMO2); alternate). Serine 37 is modified (phosphoserine). The Q motif motif lies at 44 to 72 (SGFRDFLLKPELLRAIVDCGFEHPSEVQH). Residues 75 to 248 (IPQAILGMDV…RKFMQDPMEV (174 aa)) form the Helicase ATP-binding domain. Residue 88-95 (AKSGMGKT) participates in ATP binding. Residues lysine 154 and lysine 162 each participate in a glycyl lysine isopeptide (Lys-Gly) (interchain with G-Cter in SUMO2) cross-link. Phosphothreonine is present on threonine 171. The DECD box motif lies at 195–198 (DECD). Glycyl lysine isopeptide (Lys-Gly) (interchain with G-Cter in SUMO2) cross-links involve residues lysine 240 and lysine 255. In terms of domain architecture, Helicase C-terminal spans 260–421 (GLQQYYVKLK…ELPEEIDIST (162 aa)). Phosphoserine is present on serine 426.

The protein belongs to the DEAD box helicase family. DECD subfamily. Binds ALYREF/THOC4 and DDX39B/BAT1. Interacts with the apo-AREX complex component SARNP. Interacts with MX1. Interacts with MCM3AP isoform GANP. Interacts with ECD. Interacts with PHAX; this interaction stimulates PHAX RNA binding activity. In terms of processing, SUMOylated by RANBP2; SUMOylation modification affects its ability to bind RNA.

The protein localises to the nucleus. Its subcellular location is the cytoplasm. The enzyme catalyses ATP + H2O = ADP + phosphate + H(+). Its function is as follows. Helicase that plays an essential role in mRNA export and is involved in multiple steps in RNA metabolism including alternative splicing. Regulates nuclear mRNA export to the cytoplasm through association with ECD. Also involved in spliceosomal uridine-rich small nuclear RNA (U snRNA) export by stimulating the RNA binding of adapter PHAX. Plays a role in the negative regulation of type I IFN production by increasing the nuclear retention of antiviral transcripts and thus reducing their protein expression. Independently of the interferon pathway, plays an antiviral role against alphaviruses by binding to a 5' conserved sequence element in the viral genomic RNA. The chain is ATP-dependent RNA helicase DDX39A from Mus musculus (Mouse).